Here is a 654-residue protein sequence, read N- to C-terminus: Potassium voltage-gated channel subfamily A member 4 (654 aa).

At 1 to 305 the chain is on the cytoplasmic side; it reads MEVAMVSAES…LLFEYPESSS (305 aa). The segment at 24 to 145 is disordered; sequence QARARERERL…EEGRFYYSEE (122 aa). Positions 36 to 50 are enriched in low complexity; that stretch reads SRAAAAAAVAAATAA. Residues 81 to 99 are compositionally biased toward basic residues; sequence GSRRRRRQRTEKKKLHHRQ. Ser-122 is subject to Phosphoserine. Residues 122 to 137 are compositionally biased toward acidic residues; that stretch reads SEEEEDEEEEEEEEEE. Residues 306–327 traverse the membrane as a helical segment; sequence PARGIAIVSVLVILISIVIFCL. Residues 328–371 lie on the Extracellular side of the membrane; it reads ETLPEFRDDRDLIMALSAGGHSRLLNDTSAPHLENSGHTIFNDP. Asn-353 carries N-linked (GlcNAc...) asparagine glycosylation. A helical transmembrane segment spans residues 372–393; sequence FFIVETVCIVWFSFEFVVRCFA. The Cytoplasmic portion of the chain corresponds to 394 to 404; it reads CPSQALFFKNI. Residues 405-425 form a helical membrane-spanning segment; it reads MNIIDIVSILPYFITLGTDLA. Topologically, residues 426 to 440 are extracellular; that stretch reads QQQGGGNGQQQQAMS. The helical; Voltage-sensor transmembrane segment at 441-461 threads the bilayer; the sequence is FAILRIIRLVRVFRIFKLSRH. Residues 462–476 are Cytoplasmic-facing; that stretch reads SKGLQILGHTLRASM. The interval 463–476 is S4-S5 linker; the sequence is KGLQILGHTLRASM. A helical transmembrane segment spans residues 477–498; sequence RELGLLIFFLFIGVILFSSAVY. The Extracellular segment spans residues 499-512; it reads FAEADEPTTHFQSI. Residues 513 to 524 constitute an intramembrane region (helical); the sequence is PDAFWWAVVTMT. Positions 525–530 match the Selectivity filter motif; the sequence is TVGYGD. The stretch at 525-532 is an intramembrane region; the sequence is TVGYGDMK. Residues 533–539 are Extracellular-facing; sequence PITVGGK. A helical membrane pass occupies residues 540–568; it reads IVGSLCAIAGVLTIALPVPVIVSNFNYFY. The Cytoplasmic portion of the chain corresponds to 569–654; that stretch reads HRETENEEQT…SNAKAVETDV (86 aa). A Phosphoserine; by PKA modification is found at Ser-600. The segment covering 630–641 has biased composition (basic and acidic residues); sequence CQGKGDESETDK. The segment at 630 to 654 is disordered; it reads CQGKGDESETDKNNCSNAKAVETDV. A PDZ-binding motif is present at residues 652–654; sequence TDV.

This sequence belongs to the potassium channel family. A (Shaker) (TC 1.A.1.2) subfamily. Kv1.4/KCNA4 sub-subfamily. As to quaternary structure, homotetramer and heterotetramer of potassium channel proteins. Interacts with KCNAB1 and KCNAB2. Interacts with DLG1, DLG2 and DLG4 via their PDZ domains. Interacts with SIGMAR1. Detected in a complex with KCNA1. Interacts with KCNA2. Part of a complex containing KCNA1, KCNAB1 and LGI1. Interacts (via cytoplasmic N-terminal domain) with KCNRG. As to expression, expressed in the brain, lens and retina.

The protein localises to the cell membrane. The protein resides in the cell projection. Its subcellular location is the axon. The enzyme catalyses K(+)(in) = K(+)(out). Functionally, voltage-gated potassium channel that mediates transmembrane potassium transport in excitable membranes. Forms tetrameric potassium-selective channels through which potassium ions pass in accordance with their electrochemical gradient. The channel alternates between opened and closed conformations in response to the voltage difference across the membrane. Can form functional homotetrameric channels and heterotetrameric channels that contain variable proportions of KCNA1, KCNA2, KCNA4, KCNA5, and possibly other family members as well; channel properties depend on the type of alpha subunits that are part of the channel. Channel properties are modulated by cytoplasmic beta subunits that regulate the subcellular location of the alpha subunits and promote rapid inactivation. In vivo, membranes probably contain a mixture of heteromeric potassium channel complexes, making it difficult to assign currents observed in intact tissues to any particular potassium channel family member. Homotetrameric KCNA4 forms a potassium channel that opens in response to membrane depolarization, followed by rapid spontaneous channel closure. Likewise, a heterotetrameric channel formed by KCNA1 and KCNA4 shows rapid inactivation. The chain is Potassium voltage-gated channel subfamily A member 4 (Kcna4) from Mus musculus (Mouse).